The primary structure comprises 225 residues: Ribose-5-phosphate isomerase A (225 aa).

Substrate-binding positions include 32–35 (TGST), 85–88 (DGAD), and 98–101 (KGGG). E107 (proton acceptor) is an active-site residue. K125 is a substrate binding site.

It belongs to the ribose 5-phosphate isomerase family. As to quaternary structure, homodimer.

It catalyses the reaction aldehydo-D-ribose 5-phosphate = D-ribulose 5-phosphate. The protein operates within carbohydrate degradation; pentose phosphate pathway; D-ribose 5-phosphate from D-ribulose 5-phosphate (non-oxidative stage): step 1/1. Its function is as follows. Catalyzes the reversible conversion of ribose-5-phosphate to ribulose 5-phosphate. In Hahella chejuensis (strain KCTC 2396), this protein is Ribose-5-phosphate isomerase A.